The chain runs to 350 residues: MEKQPQNKRRGLAPREVPPAVGLLLIMALMNTLLYLCLDHFFIAPRQSIVDPRHCPYGHFRIGQMKNCSPWLSCEELRTEVRQLKRVGEGAVKRVFLSEWKEHKVALSRLTSLEMKDDFLHGLQMLKSLQGAHVVTLLGYCEDDNTILTEYHPLGSLSNLEETLNLSKYQNVNTWQHRLQLAMDYVSIINYLHHSPMGTRVMCDSNDLPKTLSQYLLTSNFSILANDLDALPLVNHSSGTLVKCGHRELHGDFVAPEQLWPYGEDMPFRDNLMPSYDEKIDIWKIPDISSFLLGHIEGSDMVRFHLFDIHKACKSQTPSERPTAQDVLETYQKVLDTLRDAVMSQAREML.

N-acetylmethionine is present on Met1. Over 1-20 (MEKQPQNKRRGLAPREVPPA) the chain is Cytoplasmic. The chain crosses the membrane as a helical; Signal-anchor for type II membrane protein span at residues 21 to 43 (VGLLLIMALMNTLLYLCLDHFFI). Over 44–350 (APRQSIVDPR…AVMSQAREML (307 aa)) the chain is Lumenal. In terms of domain architecture, Protein kinase spans 81–350 (VRQLKRVGEG…AVMSQAREML (270 aa)). Asn165, Asn220, and Asn235 each carry an N-linked (GlcNAc...) asparagine glycan.

The protein belongs to the protein kinase superfamily. Ser/Thr protein kinase family. STKL subfamily.

It is found in the endoplasmic reticulum membrane. It carries out the reaction 3-O-[beta-D-GalNAc-(1-&gt;3)-beta-D-GlcNAc-(1-&gt;4)-alpha-D-Man]-L-Thr-[protein] + ATP = 3-O-[beta-D-GalNAc-(1-&gt;3)-beta-D-GlcNAc-(1-&gt;4)-(O-6-P-alpha-D-Man)]-Thr-[protein] + ADP + H(+). In terms of biological role, protein O-mannose kinase that specifically mediates phosphorylation at the 6-position of an O-mannose of the trisaccharide (N-acetylgalactosamine (GalNAc)-beta-1,3-N-acetylglucosamine (GlcNAc)-beta-1,4-mannose) to generate phosphorylated O-mannosyl trisaccharide (N-acetylgalactosamine-beta-1,3-N-acetylglucosamine-beta-1,4-(phosphate-6-)mannose). Phosphorylated O-mannosyl trisaccharide is a carbohydrate structure present in alpha-dystroglycan (DAG1), which is required for binding laminin G-like domain-containing extracellular proteins with high affinity. Only shows kinase activity when the GalNAc-beta-3-GlcNAc-beta-terminus is linked to the 4-position of O-mannose, suggesting that this disaccharide serves as the substrate recognition motif. The polypeptide is Protein O-mannose kinase (POMK) (Macaca fascicularis (Crab-eating macaque)).